Reading from the N-terminus, the 240-residue chain is Zinc import ATP-binding protein ZnuC (240 aa).

Residues 1-219 (MSLLSIAALD…PAYRAMFGLD (219 aa)) form the ABC transporter domain. Residue 36 to 43 (GPNGSGKT) coordinates ATP.

It belongs to the ABC transporter superfamily. Zinc importer (TC 3.A.1.15.5) family. As to quaternary structure, the complex is composed of two ATP-binding proteins (ZnuC), two transmembrane proteins (ZnuB) and a solute-binding protein (ZnuA).

Its subcellular location is the cell inner membrane. It carries out the reaction Zn(2+)(out) + ATP(in) + H2O(in) = Zn(2+)(in) + ADP(in) + phosphate(in) + H(+)(in). Part of the ABC transporter complex ZnuABC involved in zinc import. Responsible for energy coupling to the transport system. The chain is Zinc import ATP-binding protein ZnuC from Chromohalobacter salexigens (strain ATCC BAA-138 / DSM 3043 / CIP 106854 / NCIMB 13768 / 1H11).